A 366-amino-acid polypeptide reads, in one-letter code: tRNA/tmRNA (uracil-C(5))-methyltransferase (366 aa).

Residues glutamine 190, tyrosine 218, asparagine 223, glutamate 239, and aspartate 299 each coordinate S-adenosyl-L-methionine. Cysteine 324 serves as the catalytic Nucleophile. The active-site Proton acceptor is the glutamate 358.

It belongs to the class I-like SAM-binding methyltransferase superfamily. RNA M5U methyltransferase family. TrmA subfamily.

The enzyme catalyses uridine(54) in tRNA + S-adenosyl-L-methionine = 5-methyluridine(54) in tRNA + S-adenosyl-L-homocysteine + H(+). The catalysed reaction is uridine(341) in tmRNA + S-adenosyl-L-methionine = 5-methyluridine(341) in tmRNA + S-adenosyl-L-homocysteine + H(+). In terms of biological role, dual-specificity methyltransferase that catalyzes the formation of 5-methyluridine at position 54 (m5U54) in all tRNAs, and that of position 341 (m5U341) in tmRNA (transfer-mRNA). This chain is tRNA/tmRNA (uracil-C(5))-methyltransferase, found in Salmonella paratyphi C (strain RKS4594).